We begin with the raw amino-acid sequence, 377 residues long: Nitric oxide reductase FlRd-NAD(+) reductase (377 aa).

Belongs to the FAD-dependent oxidoreductase family. FAD is required as a cofactor.

It localises to the cytoplasm. The enzyme catalyses 2 reduced [nitric oxide reductase rubredoxin domain] + NAD(+) + H(+) = 2 oxidized [nitric oxide reductase rubredoxin domain] + NADH. The protein operates within nitrogen metabolism; nitric oxide reduction. Its function is as follows. One of at least two accessory proteins for anaerobic nitric oxide (NO) reductase. Reduces the rubredoxin moiety of NO reductase. The polypeptide is Nitric oxide reductase FlRd-NAD(+) reductase (Shigella boydii serotype 18 (strain CDC 3083-94 / BS512)).